The sequence spans 462 residues: L-seryl-tRNA(Sec) selenium transferase (462 aa).

N6-(pyridoxal phosphate)lysine is present on K295.

This sequence belongs to the SelA family. In terms of assembly, homodecamer; pentamer of dimers. Binds only one seryl-tRNA(Sec) per dimer. Requires pyridoxal 5'-phosphate as cofactor.

It localises to the cytoplasm. It carries out the reaction L-seryl-tRNA(Sec) + selenophosphate + H(+) = L-selenocysteinyl-tRNA(Sec) + phosphate. It participates in aminoacyl-tRNA biosynthesis; selenocysteinyl-tRNA(Sec) biosynthesis; selenocysteinyl-tRNA(Sec) from L-seryl-tRNA(Sec) (bacterial route): step 1/1. Its function is as follows. Converts seryl-tRNA(Sec) to selenocysteinyl-tRNA(Sec) required for selenoprotein biosynthesis. In Klebsiella pneumoniae subsp. pneumoniae (strain ATCC 700721 / MGH 78578), this protein is L-seryl-tRNA(Sec) selenium transferase.